The sequence spans 82 residues: RNA-binding protein Hfq (82 aa).

A Sm domain is found at 11–71 (DTFLNSVRKS…ISTIMPAQPV (61 aa)).

It belongs to the Hfq family. As to quaternary structure, homohexamer.

In terms of biological role, RNA chaperone that binds small regulatory RNA (sRNAs) and mRNAs to facilitate mRNA translational regulation in response to envelope stress, environmental stress and changes in metabolite concentrations. Also binds with high specificity to tRNAs. The chain is RNA-binding protein Hfq from Caulobacter sp. (strain K31).